Here is a 357-residue protein sequence, read N- to C-terminus: Solute carrier family 25 member 3 (357 aa).

Residues 1–45 constitute a mitochondrion transit peptide; sequence MFSSVAHLARANPFNAPHLQLVHDGLSGPRSPPAPPRRSRHLAAA. The Mitochondrial intermembrane segment spans residues 46 to 58; the sequence is AVEEYSCEFGSMK. 3 Solcar repeats span residues 58 to 142, 155 to 239, and 256 to 334; these read KYYA…FKAL, WRTS…TVEA, and EQLV…VKVY. A helical membrane pass occupies residues 59–81; the sequence is YYALCGFGGVLSCGLTHTAVVPL. The Mitochondrial matrix segment spans residues 82–116; sequence DLVKCRMQVDPQKYKGIFNGFSITLKEDGVRGLAK. Position 94 is an N6-acetyllysine (lysine 94). Residue lysine 107 is modified to N6-methyllysine. A helical membrane pass occupies residues 117-136; the sequence is GWAPTLIGYSMQGLCKFGFY. At 137-156 the chain is on the mitochondrial intermembrane side; that stretch reads EVFKALYSNILGEENTYLWR. A helical transmembrane segment spans residues 157–178; that stretch reads TSLYLASSASAEFFADIALAPM. At 179-213 the chain is on the mitochondrial matrix side; sequence EAAKVRIQTQPGYANTLREAVPKMYKEEGLNAFYK. At tyrosine 191 the chain carries Phosphotyrosine. Position 204 is an N6-acetyllysine (lysine 204). The helical transmembrane segment at 214–233 threads the bilayer; that stretch reads GVAPLWMRQIPYTMMKFACF. Residues 234–256 are Mitochondrial intermembrane-facing; that stretch reads ERTVEALYKFVVPKPRSECTKAE. A helical membrane pass occupies residues 257 to 279; it reads QLVVTFVAGYIAGVFCAIVSHPA. Residues 280-309 are Mitochondrial matrix-facing; that stretch reads DSVVSVLNKEKGSTASQVLQRLGFRGVWKG. Residues 310–328 form a helical membrane-spanning segment; it reads LFARIIMIGTLTALQWFIY. Topologically, residues 329 to 357 are mitochondrial intermembrane; it reads DSVKVYFRLPRPPPPEMPESLKKKLGLTE.

Belongs to the mitochondrial carrier (TC 2.A.29) family. In terms of assembly, interacts with PPIF; the interaction is impaired by CsA.

It localises to the mitochondrion inner membrane. It carries out the reaction phosphate(in) + H(+)(in) = phosphate(out) + H(+)(out). Functionally, inorganic ion transporter that transports phosphate or copper ions across the mitochondrial inner membrane into the matrix compartment. Mediates proton-coupled symport of phosphate ions necessary for mitochondrial oxidative phosphorylation of ADP to ATP. Transports copper ions probably in the form of anionic copper(I) complexes to maintain mitochondrial matrix copper pool and to supply copper for cytochrome C oxidase complex assembly. May also play a role in regulation of the mitochondrial permeability transition pore (mPTP). The chain is Solute carrier family 25 member 3 from Mus musculus (Mouse).